The chain runs to 257 residues: 4-hydroxy-tetrahydrodipicolinate reductase (257 aa).

Residues 11 to 16 and E37 contribute to the NAD(+) site; that span reads GANGRM. R38 serves as a coordination point for NADP(+). Residues 86–88 and 110–113 contribute to the NAD(+) site; these read GST and SGNY. H144 (proton donor/acceptor) is an active-site residue. Residue H145 coordinates (S)-2,3,4,5-tetrahydrodipicolinate. The active-site Proton donor is K148. 154 to 155 is a binding site for (S)-2,3,4,5-tetrahydrodipicolinate; the sequence is GT.

This sequence belongs to the DapB family.

Its subcellular location is the cytoplasm. It carries out the reaction (S)-2,3,4,5-tetrahydrodipicolinate + NAD(+) + H2O = (2S,4S)-4-hydroxy-2,3,4,5-tetrahydrodipicolinate + NADH + H(+). The catalysed reaction is (S)-2,3,4,5-tetrahydrodipicolinate + NADP(+) + H2O = (2S,4S)-4-hydroxy-2,3,4,5-tetrahydrodipicolinate + NADPH + H(+). It functions in the pathway amino-acid biosynthesis; L-lysine biosynthesis via DAP pathway; (S)-tetrahydrodipicolinate from L-aspartate: step 4/4. In terms of biological role, catalyzes the conversion of 4-hydroxy-tetrahydrodipicolinate (HTPA) to tetrahydrodipicolinate. The polypeptide is 4-hydroxy-tetrahydrodipicolinate reductase (Caulobacter vibrioides (strain ATCC 19089 / CIP 103742 / CB 15) (Caulobacter crescentus)).